The sequence spans 210 residues: Peptidyl-tRNA hydrolase (210 aa).

Tyrosine 30 provides a ligand contact to tRNA. Histidine 35 functions as the Proton acceptor in the catalytic mechanism. 3 residues coordinate tRNA: tyrosine 81, asparagine 83, and asparagine 129.

Belongs to the PTH family. Monomer.

It localises to the cytoplasm. It catalyses the reaction an N-acyl-L-alpha-aminoacyl-tRNA + H2O = an N-acyl-L-amino acid + a tRNA + H(+). Its function is as follows. Hydrolyzes ribosome-free peptidyl-tRNAs (with 1 or more amino acids incorporated), which drop off the ribosome during protein synthesis, or as a result of ribosome stalling. Catalyzes the release of premature peptidyl moieties from peptidyl-tRNA molecules trapped in stalled 50S ribosomal subunits, and thus maintains levels of free tRNAs and 50S ribosomes. The protein is Peptidyl-tRNA hydrolase of Bordetella petrii (strain ATCC BAA-461 / DSM 12804 / CCUG 43448).